The following is a 395-amino-acid chain: 1-deoxy-D-xylulose 5-phosphate reductoisomerase (395 aa).

Residues threonine 13, glycine 14, serine 15, isoleucine 16, lysine 40, and asparagine 127 each contribute to the NADPH site. Position 128 (lysine 128) interacts with 1-deoxy-D-xylulose 5-phosphate. NADPH is bound at residue glutamate 129. Residue aspartate 153 participates in Mn(2+) binding. Residues serine 154, glutamate 155, serine 184, and histidine 207 each contribute to the 1-deoxy-D-xylulose 5-phosphate site. Glutamate 155 contacts Mn(2+). Glycine 213 is a binding site for NADPH. Serine 220, asparagine 225, lysine 226, and glutamate 229 together coordinate 1-deoxy-D-xylulose 5-phosphate. Position 229 (glutamate 229) interacts with Mn(2+).

Belongs to the DXR family. The cofactor is Mg(2+). Mn(2+) is required as a cofactor.

It carries out the reaction 2-C-methyl-D-erythritol 4-phosphate + NADP(+) = 1-deoxy-D-xylulose 5-phosphate + NADPH + H(+). Its pathway is isoprenoid biosynthesis; isopentenyl diphosphate biosynthesis via DXP pathway; isopentenyl diphosphate from 1-deoxy-D-xylulose 5-phosphate: step 1/6. In terms of biological role, catalyzes the NADPH-dependent rearrangement and reduction of 1-deoxy-D-xylulose-5-phosphate (DXP) to 2-C-methyl-D-erythritol 4-phosphate (MEP). In Nitrosospira multiformis (strain ATCC 25196 / NCIMB 11849 / C 71), this protein is 1-deoxy-D-xylulose 5-phosphate reductoisomerase.